We begin with the raw amino-acid sequence, 933 residues long: MNMKKKEKHAIRKKSIGVASVLVGTLIGFGLLSSKEADASENSVTQSDSASNESKSNDSSSVSAAPKTDDTNVSDTKTSSNTNNGETSVAQNPAQQETTQSSSTNATTEETPVTGEATTTTTNQANTPATTQSSNTNAEELVNQTSNETTSNDTNTVSSVNSPQNSTNAENVSTTQDTSTEATPSNNESAPQSTDASNKDVVNQAVNTSAPRMRAFSLAAVAADAPAAGTDITNQLTNVTVGIDSGTTVYPHQAGYVKLNYGFSVPNSAVKGDTFKITVPKELNLNGVTSTAKVPPIMAGDQVLANGVIDSDGNVIYTFTDYVNTKDDVKATLTMPAYIDPENVKKTGNVTLATGIGSTTANKTVLVDYEKYGKFYNLSIKGTIDQIDKTNNTYRQTIYVNPSGDNVIAPVLTGNLKPNTDSNALIDQQNTSIKVYKVDNAADLSESYFVNPENFEDVTNSVNITFPNPNQYKVEFNTPDDQITTPYIVVVNGHIDPNSKGDLALRSTLYGYNSNIIWRSMSWDNEVAFNNGSGSGDGIDKPVVPEQPDEPGEIEPIPEDSDSDPGSDSGSDSNSDSGSDSGSDSTSDSGSDSASDSDSASDSDSASDSDSASDSDSASDSDSDNDSDSDSDSDSDSDSDSDSDSDSDSDSDSDSDSDSDSDSDSDSDSDSDSDSDSDSDSDSDSDSDSDSDSDSDSDSDSDSDSDSDSDSDSDSDSDSDSDSDSDSDSDSDSDSDSDSDSDSDSDSDSDSDSDSDSDSDSDSDSDSASDSDSDSDSDSDSDSDSDSDSDSDSDSDSDSDSDSDSDSESDSDSESDSDSDSDSDSDSDSDSDSDSDSASDSDSGSDSDSSSDSDSESDSNSDSESGSNNNVVPPNSPKNGTNASNKNEAKDSKEPLPDTGSEDEANTSLIWGLLASIGSLLLFRRKKENKDKK.

Residues 1–39 (MNMKKKEKHAIRKKSIGVASVLVGTLIGFGLLSSKEADA) form the signal peptide. Residues 9 to 20 (HAIRKKSIGVAS) carry the YSIRK-G/S signaling motif motif. Disordered regions lie at residues 34–200 (SKEA…SNKD) and 529–904 (FNNG…SEDE). The segment at 40–542 (SENSVTQSDS…SGSGDGIDKP (503 aa)) is ligand binding A region. Low complexity predominate over residues 47 to 65 (SDSASNESKSNDSSSVSAA). Residues 71–105 (TNVSDTKTSSNTNNGETSVAQNPAQQETTQSSSTN) are compositionally biased toward polar residues. Composition is skewed to low complexity over residues 106 to 132 (ATTE…ATTQ) and 143 to 162 (NQTS…SVNS). Positions 163–200 (PQNSTNAENVSTTQDTSTEATPSNNESAPQSTDASNKD) are enriched in polar residues. A compositionally biased stretch (acidic residues) spans 547-565 (QPDEPGEIEPIPEDSDSDP). The segment covering 566–598 (GSDSGSDSNSDSGSDSGSDSTSDSGSDSASDSD) has biased composition (low complexity). A compositionally biased stretch (acidic residues) spans 599–861 (SASDSDSASD…DSDSESDSNS (263 aa)). Residues 862–880 (DSESGSNNNVVPPNSPKNG) show a composition bias toward low complexity. Positions 887–896 (NEAKDSKEPL) are enriched in basic and acidic residues. An LPXTG sorting signal motif is present at residues 896–900 (LPDTG). Residue threonine 899 is modified to Pentaglycyl murein peptidoglycan amidated threonine. Positions 900-933 (GSEDEANTSLIWGLLASIGSLLLFRRKKENKDKK) are cleaved as a propeptide — removed by sortase.

This sequence belongs to the serine-aspartate repeat-containing protein (SDr) family.

The protein localises to the secreted. It localises to the cell wall. Functionally, cell surface-associated protein implicated in virulence. Promotes bacterial attachment exclusively to the gamma-chain of human fibrinogen. Induces formation of bacterial clumps. The chain is Clumping factor A (clfA) from Staphylococcus aureus (strain COL).